The sequence spans 342 residues: MSTDKITFLTNWHATPYHAPLYLAQSKGYFKEEGLKVALLEPNDPSDVTEIIGSGKVDMGFKAMIHTLAAKARNFPVTSIGSLLDEPFTGVVYLKDSGITEDFRSLKGKKIGYVGEFGKIQIDELTKYYGMTADDYTAVRCGMNVTKAIIRGDIDAGIGLENVQMVELAEWLASQNRPRDDVQIVRIDQLAELGCCCFCSILYIANDAFLAANPEKVQKFMRAVKRATDYVLAEPAAAFEEYVDMKPIMGTPVNRKIFERSFAYFSRDLKNVSRDWAKVTNYGKRLGILDADFQPNYTNQYLSWTLDADSTDPLGDQKRMAELQKEVACEGGFKRLQVASSA.

Lys-62 is modified (N6-(pyridoxal phosphate)lysine). Residue His-66 is part of the active site. 115–118 lines the pyridoxal 5'-phosphate pocket; it reads GEFG. Residues 195–199 carry the CCCFC; essential for catalytic activity, may be the site of iron coordination motif; the sequence is CCCFC.

Belongs to the NMT1/THI5 family. Homodimer. Fe cation serves as cofactor.

The catalysed reaction is N(6)-(pyridoxal phosphate)-L-lysyl-[4-amino-5-hydroxymethyl-2-methylpyrimidine phosphate synthase] + L-histidyl-[4-amino-5-hydroxymethyl-2-methylpyrimidine phosphate synthase] + 2 Fe(3+) + 4 H2O = L-lysyl-[4-amino-5-hydroxymethyl-2-methylpyrimidine phosphate synthase] + (2S)-2-amino-5-hydroxy-4-oxopentanoyl-[4-amino-5-hydroxymethyl-2-methylpyrimidine phosphate synthase] + 4-amino-2-methyl-5-(phosphooxymethyl)pyrimidine + 3-oxopropanoate + 2 Fe(2+) + 2 H(+). Its pathway is cofactor biosynthesis; thiamine diphosphate biosynthesis. Functionally, responsible for the formation of the pyrimidine heterocycle in the thiamine biosynthesis pathway. Catalyzes the formation of hydroxymethylpyrimidine phosphate (HMP-P) from histidine and pyridoxal phosphate (PLP). The protein uses PLP and the active site histidine to form HMP-P, generating an inactive enzyme. The enzyme can only undergo a single turnover, which suggests it is a suicide enzyme. The sequence is that of 4-amino-5-hydroxymethyl-2-methylpyrimidine phosphate synthase from Aspergillus parasiticus.